A 935-amino-acid chain; its full sequence is UvrABC system protein A (935 aa).

Position 31-38 (31-38 (GLSGSGKS)) interacts with ATP. The C4-type zinc finger occupies 254-281 (CFKCKMSFEELEPLSFSFNSPKGACESC). ABC transporter domains are found at residues 310–579 (IFGY…NNHS) and 599–931 (KEKH…KFLA). Residue 631-638 (GVSGSGKS) coordinates ATP. The segment at 731–757 (CEKCQGDGDIKIEMHFLPDVLVQCDSC) adopts a C4-type zinc-finger fold.

This sequence belongs to the ABC transporter superfamily. UvrA family. Forms a heterotetramer with UvrB during the search for lesions.

Its subcellular location is the cytoplasm. Its function is as follows. The UvrABC repair system catalyzes the recognition and processing of DNA lesions. UvrA is an ATPase and a DNA-binding protein. A damage recognition complex composed of 2 UvrA and 2 UvrB subunits scans DNA for abnormalities. When the presence of a lesion has been verified by UvrB, the UvrA molecules dissociate. The chain is UvrABC system protein A from Helicobacter pylori (strain ATCC 700392 / 26695) (Campylobacter pylori).